A 491-amino-acid polypeptide reads, in one-letter code: Delayed-rectifier potassium channel regulatory subunit KCNS3 (491 aa).

Topologically, residues 1-182 (MVFGEFFHRP…IRMENPAYCL (182 aa)) are cytoplasmic. Residues 183–204 (SAKLIAISSLSVVLASIVAMCV) form a helical membrane-spanning segment. The Extracellular portion of the chain corresponds to 205-220 (HSMSEFQNEDGEVDDP). A helical transmembrane segment spans residues 221-243 (VLEGVEIACIAWFTGELAIRLVA). Topologically, residues 244–254 (APSQKKFWKNP) are cytoplasmic. A helical transmembrane segment spans residues 255-275 (LNIIDFVSIIPFYATLAVDTK). Residues 276 to 285 (EEESEDIENM) lie on the Extracellular side of the membrane. A helical; Voltage-sensor transmembrane segment spans residues 286–306 (GKVVQILRLMRIFRILKLARH). Over 307–321 (SVGLRSLGATLRHSY) the chain is Cytoplasmic. A helical transmembrane segment spans residues 322–343 (HEVGLLLLFLSVGISIFSVLIY). The Extracellular portion of the chain corresponds to 344–357 (SVEKDELASSLTSI). Residues 358-369 (PICWWWATISMT) constitute an intramembrane region (helical). The short motif at 370-375 (TVGYGD) is the Selectivity filter element. The stretch at 370–377 (TVGYGDTH) is an intramembrane region. Residues 378–384 (PVTLAGK) lie on the Extracellular side of the membrane. The chain crosses the membrane as a helical span at residues 385-413 (IIASTCIICGILVVALPITIIFNKFSKYY). Over 414 to 491 (QKQKDMDVDQ…TASLENCTAK (78 aa)) the chain is Cytoplasmic.

This sequence belongs to the potassium channel family. S (TC 1.A.1.2) subfamily. Kv9.3/KCNS3 sub-subfamily. As to quaternary structure, heterotetramer with KCNB1. Does not form homomultimers. In terms of tissue distribution, expressed in myocytes. Detected in lung, spleen, brain and heart.

It is found in the cell membrane. Functionally, potassium channel regulatory subunit that modulates the delayed rectifier potassium channel activity of KCNB1 by namely slowing down the deactivation and inactivation time constants. While it does not form functional channel on its own, it can form functional heterotetrameric channels with KCNB1. In Rattus norvegicus (Rat), this protein is Delayed-rectifier potassium channel regulatory subunit KCNS3.